We begin with the raw amino-acid sequence, 630 residues long: 1-deoxy-D-xylulose-5-phosphate synthase (630 aa).

Thiamine diphosphate-binding positions include H72 and G113 to S115. A Mg(2+)-binding site is contributed by D144. Thiamine diphosphate is bound by residues G145 to A146, N173, Y284, and E367. N173 serves as a coordination point for Mg(2+).

Belongs to the transketolase family. DXPS subfamily. In terms of assembly, homodimer. Mg(2+) is required as a cofactor. It depends on thiamine diphosphate as a cofactor.

It catalyses the reaction D-glyceraldehyde 3-phosphate + pyruvate + H(+) = 1-deoxy-D-xylulose 5-phosphate + CO2. It participates in metabolic intermediate biosynthesis; 1-deoxy-D-xylulose 5-phosphate biosynthesis; 1-deoxy-D-xylulose 5-phosphate from D-glyceraldehyde 3-phosphate and pyruvate: step 1/1. Functionally, catalyzes the acyloin condensation reaction between C atoms 2 and 3 of pyruvate and glyceraldehyde 3-phosphate to yield 1-deoxy-D-xylulose-5-phosphate (DXP). The sequence is that of 1-deoxy-D-xylulose-5-phosphate synthase from Bacillus cytotoxicus (strain DSM 22905 / CIP 110041 / 391-98 / NVH 391-98).